Consider the following 123-residue polypeptide: Homeobox protein CDX-1 (123 aa).

The homeobox DNA-binding region spans 5–64 (KDKYRVVYTDHQRLELEKEFHYSRYITIRRKSELAANLGLTERQVKIWFQNRRAKERKVN). Residues 8 to 29 (YRVVYTDHQRLELEKEFHYSRY) are interaction with DNA. An interaction with 5-mCpG DNA region spans residues 47–58 (RQVKIWFQNRRA). Residues 57-68 (RAKERKVNKKKQ) are compositionally biased toward basic residues. The disordered stretch occupies residues 57 to 123 (RAKERKVNKK…PVPVKEEFLP (67 aa)).

This sequence belongs to the Caudal homeobox family. In terms of tissue distribution, intestinal epithelium.

The protein localises to the nucleus. Plays a role in transcriptional regulation. Involved in activated KRAS-mediated transcriptional activation of PRKD1 in colorectal cancer (CRC) cells. Binds to the PRKD1 promoter in colorectal cancer (CRC) cells. Could play a role in the terminal differentiation of the intestine. Binds preferentially to methylated DNA. The chain is Homeobox protein CDX-1 (Cdx1) from Rattus norvegicus (Rat).